A 320-amino-acid chain; its full sequence is MNHTSDTALLIVNLGTPEAPTAAAVRRYLGEFLSDRRVVSIPPLFWKPLLHMVILPIRGPRSASKYAKVWLQEGSPLSVYTRRIAEGLTQHLPDWRVAWAMRYGAPALTKALDALQAQQVRRIVILPLYPQYSTTTTASVQDVVEAWCKRTPQVQVECIQDYAEDPAWVAAVAASIRRHWQAHGRSEKLMFSFHGLPQRVANNGDPYPQRCQVSASLIAAALNLNESEWVLGYQSRFGTERWLQPYAEPTLWALAESGIRRFDLVCPGFSVDCLETLEEVALGFSETLAARGATMRYIPCLNDDPAHVQALAGLAQRALL.

Positions 194 and 275 each coordinate Fe cation.

This sequence belongs to the ferrochelatase family.

It is found in the cytoplasm. The enzyme catalyses heme b + 2 H(+) = protoporphyrin IX + Fe(2+). Its pathway is porphyrin-containing compound metabolism; protoheme biosynthesis; protoheme from protoporphyrin-IX: step 1/1. Its function is as follows. Catalyzes the ferrous insertion into protoporphyrin IX. This Xylella fastidiosa (strain M12) protein is Ferrochelatase.